The sequence spans 363 residues: Somatostatin receptor type 5 (363 aa).

Residues 1-35 are Extracellular-facing; the sequence is MEPLSLASTPSWNASAASSGNHNWSLVGSASPMGA. Asn13 and Asn23 each carry an N-linked (GlcNAc...) asparagine glycan. Residues 36–63 form a helical membrane-spanning segment; it reads RAVLVPVLYLLVCTVGLSGNTLVIYVVL. Topologically, residues 64-73 are cytoplasmic; that stretch reads RHAKMKTVTN. A helical membrane pass occupies residues 74–99; that stretch reads VYILNLAVADVLFMLGLPFLATQNAV. At 100–111 the chain is on the extracellular side; the sequence is VSYWPFGSFLCR. Residues Cys110 and Cys185 are joined by a disulfide bond. Residues 112–133 form a helical membrane-spanning segment; that stretch reads LVMTLDGINQFTSIFCLMVMSV. Over 134–155 the chain is Cytoplasmic; the sequence is DRYLAVVHPLRSARWRRPRVAK. Residues 156–176 form a helical membrane-spanning segment; it reads MASAAVWVFSLLMSLPLLVFA. The Extracellular segment spans residues 177–196; it reads DVQEGWGTCNLSWPEPVGLW. N-linked (GlcNAc...) asparagine glycosylation occurs at Asn186. A helical transmembrane segment spans residues 197–221; the sequence is GAAFITYTSVLGFFGPLLVICLCYL. Over 222-247 the chain is Cytoplasmic; the sequence is LIVVKVKAAGMRVGSSRRRRSEPKVT. Residues 248-273 traverse the membrane as a helical segment; the sequence is RMVVVVVLVFVGCWLPFFIVNIVNLA. Residues 274 to 283 lie on the Extracellular side of the membrane; sequence FTLPEEPTSA. A helical membrane pass occupies residues 284–308; it reads GLYFFVVVLSYANSCANPLLYGFLS. The Cytoplasmic portion of the chain corresponds to 309–363; the sequence is DNFRQSFRKVLCLRRGYGMEDADAIEPRPDKSGRPQATLPTRSCEANGLMQTSRI. A lipid anchor (S-palmitoyl cysteine; by ZDHHC5) is attached at Cys320. The interval 331-363 is disordered; the sequence is DAIEPRPDKSGRPQATLPTRSCEANGLMQTSRI.

This sequence belongs to the G-protein coupled receptor 1 family. In terms of assembly, heterodimer with SSTR2. Heterodimerization with SSTR2 increases cell growth inhibition activity of SSTR2. Post-translationally, palmitoylated at Cys-320 by ZDHHC5, but not ZDHHC8. Palmitoylation creates an additional intracellular loop which is thought to be important for efficient coupling to G-proteins and may target the protein to lipid rafts. Prominent in the pituitary and small intestine. Low levels in islets and spleen. Not detected in kidney, pancreas, cerebellum, or cortex.

Its subcellular location is the cell membrane. Functionally, receptor for somatostatin-28. The activity of this receptor is mediated by G proteins which inhibit adenylyl cyclase. Increases cell growth inhibition activity of SSTR2 following heterodimerization. This chain is Somatostatin receptor type 5 (Sstr5), found in Rattus norvegicus (Rat).